The following is a 425-amino-acid chain: tRNA(Met) cytidine acetate ligase (425 aa).

ATP contacts are provided by residues 7-20, Gly-102, Asn-165, and 190-191; these read IVEYNPFHNGHLYH and RI.

The protein belongs to the TmcAL family.

Its subcellular location is the cytoplasm. It carries out the reaction cytidine(34) in elongator tRNA(Met) + acetate + ATP = N(4)-acetylcytidine(34) in elongator tRNA(Met) + AMP + diphosphate. Functionally, catalyzes the formation of N(4)-acetylcytidine (ac(4)C) at the wobble position of elongator tRNA(Met), using acetate and ATP as substrates. First activates an acetate ion to form acetyladenylate (Ac-AMP) and then transfers the acetyl group to tRNA to form ac(4)C34. This chain is tRNA(Met) cytidine acetate ligase, found in Thermosipho melanesiensis (strain DSM 12029 / CIP 104789 / BI429).